Here is a 289-residue protein sequence, read N- to C-terminus: Light-independent protochlorophyllide reductase iron-sulfur ATP-binding protein (289 aa).

ATP is bound by residues 10-15 (GIGKST) and K39. S14 contributes to the Mg(2+) binding site. Positions 95 and 129 each coordinate [4Fe-4S] cluster. 180–181 (NR) contacts ATP.

It belongs to the NifH/BchL/ChlL family. As to quaternary structure, homodimer. Protochlorophyllide reductase is composed of three subunits; ChlL, ChlN and ChlB. It depends on [4Fe-4S] cluster as a cofactor.

It localises to the plastid. Its subcellular location is the chloroplast. It carries out the reaction chlorophyllide a + oxidized 2[4Fe-4S]-[ferredoxin] + 2 ADP + 2 phosphate = protochlorophyllide a + reduced 2[4Fe-4S]-[ferredoxin] + 2 ATP + 2 H2O. It functions in the pathway porphyrin-containing compound metabolism; chlorophyll biosynthesis (light-independent). Its function is as follows. Component of the dark-operative protochlorophyllide reductase (DPOR) that uses Mg-ATP and reduced ferredoxin to reduce ring D of protochlorophyllide (Pchlide) to form chlorophyllide a (Chlide). This reaction is light-independent. The L component serves as a unique electron donor to the NB-component of the complex, and binds Mg-ATP. The sequence is that of Light-independent protochlorophyllide reductase iron-sulfur ATP-binding protein from Marchantia polymorpha (Common liverwort).